A 272-amino-acid polypeptide reads, in one-letter code: Shikimate dehydrogenase (NADP(+)) (272 aa).

Residues 14-16 (SKS) and threonine 61 each bind shikimate. Catalysis depends on lysine 65, which acts as the Proton acceptor. Glutamate 77 serves as a coordination point for NADP(+). 2 residues coordinate shikimate: asparagine 86 and aspartate 102. NADP(+)-binding positions include 126–130 (GAGGA), 149–154 (NRTASR), and methionine 213. Tyrosine 215 is a shikimate binding site. Position 237 (glycine 237) interacts with NADP(+).

It belongs to the shikimate dehydrogenase family. Homodimer.

The enzyme catalyses shikimate + NADP(+) = 3-dehydroshikimate + NADPH + H(+). The protein operates within metabolic intermediate biosynthesis; chorismate biosynthesis; chorismate from D-erythrose 4-phosphate and phosphoenolpyruvate: step 4/7. Its function is as follows. Involved in the biosynthesis of the chorismate, which leads to the biosynthesis of aromatic amino acids. Catalyzes the reversible NADPH linked reduction of 3-dehydroshikimate (DHSA) to yield shikimate (SA). This chain is Shikimate dehydrogenase (NADP(+)), found in Salmonella choleraesuis (strain SC-B67).